The following is a 403-amino-acid chain: N-isopropylammelide isopropyl amidohydrolase (403 aa).

Zn(2+) contacts are provided by H60, H62, and H217. H249 (proton donor/acceptor) is an active-site residue. D303 serves as a coordination point for Zn(2+).

Belongs to the metallo-dependent hydrolases superfamily. N-acyl-D-amino-acid deacylase family. Homotetramer. Zn(2+) is required as a cofactor.

It is found in the cytoplasm. The catalysed reaction is N-isopropylammelide + H2O + H(+) = isopropylamine + cyanurate. It functions in the pathway xenobiotic degradation; atrazine degradation; cyanurate from atrazine: step 3/3. Inhibited by N-ethylammeline, N-hydroxyethylammeline, N-isopropylammeline, ammeline and 2-amino-4hydroxy-1,3,5-s-triazine. In terms of biological role, transforms N-isopropylammelide to cyanuric acid and isopropylamine. This Pseudomonas sp. (strain ADP) protein is N-isopropylammelide isopropyl amidohydrolase (atzC).